Reading from the N-terminus, the 274-residue chain is Actin-binding protein Smlt3054 (274 aa).

ANK repeat units follow at residues 192-221 (SGNT…DVAA) and 225-254 (HGWA…NPEQ). Positions 251-274 (NPEQPGWRGRTPTRMHRHEQTQAL) are disordered.

Exists as a dimer as well as a higher order oligomer.

The protein resides in the secreted. It localises to the periplasm. Directly binds F-actin, which results in thickened and distorted F-actin fibers, and affects cellular F-actin localization. Thus, may be a host effector whose function is to disrupt host actin cytoskeletal structure, which may enhance invasion. The protein is Actin-binding protein Smlt3054 of Stenotrophomonas maltophilia (strain K279a).